The sequence spans 240 residues: Uridylate kinase (240 aa).

13–16 (KISG) lines the ATP pocket. UMP is bound at residue G55. Residues G56 and R60 each coordinate ATP. Residues D75 and 136-143 (TGNPFFTT) each bind UMP. ATP-binding residues include T163, Q164, Y169, and D172.

The protein belongs to the UMP kinase family. Homohexamer.

The protein localises to the cytoplasm. It catalyses the reaction UMP + ATP = UDP + ADP. Its pathway is pyrimidine metabolism; CTP biosynthesis via de novo pathway; UDP from UMP (UMPK route): step 1/1. Inhibited by UTP. In terms of biological role, catalyzes the reversible phosphorylation of UMP to UDP. This chain is Uridylate kinase, found in Paramagnetospirillum magneticum (strain ATCC 700264 / AMB-1) (Magnetospirillum magneticum).